The following is a 266-amino-acid chain: Putative carbamate hydrolase RutD (266 aa).

The 103-residue stretch at 14-116 (PVVVLISGLG…VLVSVNGWLR (103 aa)) folds into the AB hydrolase-1 domain.

The protein belongs to the AB hydrolase superfamily. Hydrolase RutD family.

It carries out the reaction carbamate + 2 H(+) = NH4(+) + CO2. In terms of biological role, involved in pyrimidine catabolism. May facilitate the hydrolysis of carbamate, a reaction that can also occur spontaneously. This is Putative carbamate hydrolase RutD from Escherichia coli O81 (strain ED1a).